The following is a 129-amino-acid chain: UPF0102 protein Cag_1992 (129 aa).

This sequence belongs to the UPF0102 family.

The sequence is that of UPF0102 protein Cag_1992 from Chlorobium chlorochromatii (strain CaD3).